We begin with the raw amino-acid sequence, 189 residues long: 3-hydroxyanthranilate 3,4-dioxygenase (189 aa).

O2 is bound at residue Arg-50. Fe cation-binding residues include His-54, Glu-60, and His-102. Substrate is bound at residue Glu-60. Substrate-binding residues include Arg-106 and Glu-116. 4 residues coordinate a divalent metal cation: Cys-131, Cys-136, Cys-170, and Cys-173.

Belongs to the 3-HAO family. The cofactor is Fe(2+).

Its subcellular location is the cytoplasm. It carries out the reaction 3-hydroxyanthranilate + O2 = (2Z,4Z)-2-amino-3-carboxymuconate 6-semialdehyde. The protein operates within cofactor biosynthesis; NAD(+) biosynthesis; quinolinate from L-kynurenine: step 3/3. Functionally, catalyzes the oxidative ring opening of 3-hydroxyanthranilate to 2-amino-3-carboxymuconate semialdehyde, which spontaneously cyclizes to quinolinate. This is 3-hydroxyanthranilate 3,4-dioxygenase (bna1) from Aspergillus niger (strain ATCC MYA-4892 / CBS 513.88 / FGSC A1513).